Consider the following 306-residue polypeptide: LysM and putative peptidoglycan-binding domain-containing protein 3 (306 aa).

The Extracellular portion of the chain corresponds to 1–217 (MAGRHQNRSF…PYYGADWGIG (217 aa)). A glycan (N-linked (GlcNAc...) asparagine) is linked at asparagine 7. The residue at position 55 (serine 55) is a Phosphoserine. The LysM domain maps to 65–109 (LTKDIQEGDTLNAIALQYCCTVADIKRVNNLISDQDFFALRSIKI). The helical transmembrane segment at 218–238 (WWTAVVIMLIVGIITPVFYLL) threads the bilayer. Residues 239-306 (YYEILAKVDV…SQSPAAQQET (68 aa)) lie on the Cytoplasmic side of the membrane.

Its subcellular location is the cell membrane. The protein localises to the golgi apparatus. Essential for Golgi structural integrity. In Homo sapiens (Human), this protein is LysM and putative peptidoglycan-binding domain-containing protein 3 (LYSMD3).